The sequence spans 348 residues: Glycerol-1-phosphate dehydrogenase [NAD(P)+] (348 aa).

NAD(+)-binding positions include 94–98 and 116–119; these read GKPID and TAAS. Asp-121 lines the substrate pocket. Residue Ser-125 participates in NAD(+) binding. A substrate-binding site is contributed by Asp-168. Asp-168 and His-248 together coordinate Zn(2+). Residue His-252 participates in substrate binding. Residue His-264 participates in Zn(2+) binding.

The protein belongs to the glycerol-1-phosphate dehydrogenase family. It depends on Zn(2+) as a cofactor.

It localises to the cytoplasm. The enzyme catalyses sn-glycerol 1-phosphate + NAD(+) = dihydroxyacetone phosphate + NADH + H(+). It carries out the reaction sn-glycerol 1-phosphate + NADP(+) = dihydroxyacetone phosphate + NADPH + H(+). The protein operates within membrane lipid metabolism; glycerophospholipid metabolism. In terms of biological role, catalyzes the NAD(P)H-dependent reduction of dihydroxyacetonephosphate (DHAP or glycerone phosphate) to glycerol 1-phosphate (G1P). The G1P thus generated is used as the glycerophosphate backbone of phospholipids in the cellular membranes of Archaea. This Haloquadratum walsbyi (strain DSM 16790 / HBSQ001) protein is Glycerol-1-phosphate dehydrogenase [NAD(P)+].